Reading from the N-terminus, the 325-residue chain is Elongation factor P--(R)-beta-lysine ligase (325 aa).

Residue serine 76 to glutamate 78 participates in substrate binding. ATP-binding positions include arginine 100–glutamate 102 and asparagine 109. Tyrosine 118 is a binding site for substrate. Position 244–245 (glutamate 244–leucine 245) interacts with ATP. Glutamate 251 is a substrate binding site. Glycine 300 lines the ATP pocket.

It belongs to the class-II aminoacyl-tRNA synthetase family. EpmA subfamily. Homodimer.

The catalysed reaction is D-beta-lysine + L-lysyl-[protein] + ATP = N(6)-((3R)-3,6-diaminohexanoyl)-L-lysyl-[protein] + AMP + diphosphate + H(+). Its function is as follows. With EpmB is involved in the beta-lysylation step of the post-translational modification of translation elongation factor P (EF-P). Catalyzes the ATP-dependent activation of (R)-beta-lysine produced by EpmB, forming a lysyl-adenylate, from which the beta-lysyl moiety is then transferred to the epsilon-amino group of a conserved specific lysine residue in EF-P. The sequence is that of Elongation factor P--(R)-beta-lysine ligase from Pectobacterium atrosepticum (strain SCRI 1043 / ATCC BAA-672) (Erwinia carotovora subsp. atroseptica).